We begin with the raw amino-acid sequence, 71 residues long: UPF0437 protein asl1434 (71 aa).

It belongs to the UPF0437 family.

The protein is UPF0437 protein asl1434 of Nostoc sp. (strain PCC 7120 / SAG 25.82 / UTEX 2576).